The following is a 994-amino-acid chain: Sarcoplasmic/endoplasmic reticulum calcium ATPase 1 (994 aa).

The Cytoplasmic portion of the chain corresponds to 1-48; the sequence is MENAHAKTAEECLAFFGVNESVGLSGEQVRRALEKYGHNELPAEEGKT. Residues 49 to 69 traverse the membrane as a helical segment; the sequence is IWELVVEQFEDLLVRILLLAA. Residues 70 to 89 are Lumenal-facing; it reads CISFVLAWFEEGEETITAFV. Residues 90–110 traverse the membrane as a helical segment; the sequence is EPFVILLILIANAVVGVWQER. Topologically, residues 111-253 are cytoplasmic; it reads NAENAIEALK…QDKTPLQQKL (143 aa). The helical transmembrane segment at 254 to 273 threads the bilayer; sequence DEFGEQLSKVISLICVAVWL. Topologically, residues 274 to 295 are lumenal; the sequence is INIGHFNDPVHGGSWIRGAIYY. Residues 296-313 traverse the membrane as a helical segment; sequence FKIAVALAVAAIPEGLPA. Ca(2+) is bound by residues Val-304, Ala-305, Ile-307, and Glu-309. Topologically, residues 314–757 are cytoplasmic; the sequence is VITTCLALGT…EEGRAIYNNM (444 aa). Asp-351 acts as the 4-aspartylphosphate intermediate in catalysis. Mg(2+)-binding residues include Asp-351 and Thr-353. ATP-binding residues include Thr-353, Glu-442, Arg-489, Lys-515, Arg-560, Thr-625, Gly-626, Asp-627, Arg-678, and Lys-684. Asp-703 serves as a coordination point for Mg(2+). Asn-706 contacts ATP. Residues 758–777 form a helical membrane-spanning segment; that stretch reads KQFIRYLISSNVGEVVCIFL. Ca(2+)-binding residues include Asn-768 and Glu-771. Topologically, residues 778–787 are lumenal; sequence TAALGLPEAL. A helical membrane pass occupies residues 788–808; that stretch reads IPVQLLWVNLVTDGLPATALG. Residues 788-808 are interaction with PLN; sequence IPVQLLWVNLVTDGLPATALG. Ca(2+)-binding residues include Asn-796, Thr-799, and Asp-800. At 809–828 the chain is on the cytoplasmic side; it reads FNPPDLDIMDKPPRSPKEPL. Residues 829-851 form a helical membrane-spanning segment; it reads ISGWLFFRYLAIGGYVGAATVGA. At 852–897 the chain is on the lumenal side; it reads AAWWFLYAEDGPSLTYHQLTHFMQCTHHNAEFEGVDCDIFESPVPM. The cysteines at positions 876 and 888 are disulfide-linked. The chain crosses the membrane as a helical span at residues 898–917; that stretch reads TMALSVLVTIEMCNALNSLS. Glu-908 provides a ligand contact to Ca(2+). Residues 918-930 are Cytoplasmic-facing; that stretch reads ENQSLLRMPPWVN. Residues 931-949 traverse the membrane as a helical segment; the sequence is IWLVGSICLSMSLHFVILY. Residues 932-943 form an interaction with PLN region; it reads WLVGSICLSMSL. At 950-964 the chain is on the lumenal side; that stretch reads VDPLPMIFKLTHLDL. The chain crosses the membrane as a helical span at residues 965–985; it reads AHWLVVLRISFPVILLDEALK. The Cytoplasmic portion of the chain corresponds to 986–994; the sequence is FVARNYLEA.

It belongs to the cation transport ATPase (P-type) (TC 3.A.3) family. Type IIA subfamily. As to quaternary structure, interacts with sarcolipin (SLN). Interacts with phospholamban (PLN). Interacts with myoregulin (MRLN). Interacts with DWORF. Mg(2+) serves as cofactor.

It is found in the endoplasmic reticulum membrane. Its subcellular location is the sarcoplasmic reticulum membrane. It carries out the reaction Ca(2+)(in) + ATP + H2O = Ca(2+)(out) + ADP + phosphate + H(+). Its activity is regulated as follows. Inhibited by sarcolipin (SLN) and myoregulin (MRLN). Also shown to be inhibited by phospholamban (PLN) in vitro. Enhanced by DWORF; DWORF increases activity by displacing sarcolipin (SLN), phospholamban (PLN) and myoregulin (MRLN). Its function is as follows. Key regulator of striated muscle performance by acting as the major Ca(2+) ATPase responsible for the reuptake of cytosolic Ca(2+) into the sarcoplasmic reticulum. Catalyzes the hydrolysis of ATP coupled with the translocation of calcium from the cytosol to the sarcoplasmic reticulum lumen. Contributes to calcium sequestration involved in muscular excitation/contraction. This Gallus gallus (Chicken) protein is Sarcoplasmic/endoplasmic reticulum calcium ATPase 1 (ATP2A1).